Reading from the N-terminus, the 309-residue chain is Uricase-2 isozyme 1 (309 aa).

Residues Lys18 and Thr64 each act as charge relay system in the active site. Residues Thr64, Asp65, Phe166, Arg183, Val238, Gln239, and Asn265 each contribute to the urate site. His267 acts as the Charge relay system in catalysis. Residues 307-309 (SKL) carry the Microbody targeting signal motif.

It belongs to the uricase family. In terms of assembly, homotetramer. Post-translationally, the N-terminus is blocked. In terms of tissue distribution, expressed predominantly in the uninfected cells of the central tissue of the root nodule.

The protein resides in the peroxisome. The enzyme catalyses urate + O2 + H2O = 5-hydroxyisourate + H2O2. Its pathway is purine metabolism; urate degradation; (S)-allantoin from urate: step 1/3. Its function is as follows. Catalyzes the oxidation of uric acid to 5-hydroxyisourate, which is further processed to form (S)-allantoin. This is Uricase-2 isozyme 1 from Glycine max (Soybean).